The following is a 2764-amino-acid chain: Teneurin-2 (2764 aa).

In terms of domain architecture, Teneurin N-terminal spans 1–375 (MDVKDRRHRS…KPSKYCSWKC (375 aa)). Residues 1 to 379 (MDVKDRRHRS…YCSWKCAALS (379 aa)) are Cytoplasmic-facing. A phosphoserine mark is found at S90 and S124. Residues 111-271 (TGSDADSDTE…HHHSSANSLN (161 aa)) are disordered. Positions 141 to 155 (SSGLSSRENSALTLT) are enriched in polar residues. T155 carries the post-translational modification Phosphothreonine. Residue S157 is modified to Phosphoserine. Positions 159–168 (NENKSDDDNG) are enriched in basic and acidic residues. Over residues 174–188 (TSSSSLLPSAQLPSS) the composition is skewed to low complexity. Positions 202-211 (DSNTSHQIMD) are enriched in polar residues. The span at 229–240 (SGPQQASSSGPP) shows a compositional bias: low complexity. The helical transmembrane segment at 380–400 (AIAAALLLAILLAYFIAMHLL) threads the bilayer. The Extracellular segment spans residues 401-2764 (GLNWQLQPAD…FLRQNEMGKR (2364 aa)). N443 and N482 each carry an N-linked (GlcNAc...) asparagine glycan. 8 EGF-like domains span residues 575 to 603 (DCPRNCHGNGECVSGLCHCFPGFLGADCA), 598 to 634 (LGADCAKAACPVLCSGNGQYSKGTCQCYSGWKGAECD), 636 to 668 (PMNQCIDPSCGGHGSCIDGNCVCAAGYKGEHCE), 669 to 701 (EVDCLDPTCSSHGVCVNGECLCSPGWGGLNCEL), 702 to 735 (ARVQCPDQCSGHGTYLPDSGLCSCDPNWMGPDCS), 737 to 765 (VCSVDCGTHGVCIGGACRCEEGWTGAACD), 768 to 796 (VCHPRCIEHGTCKDGKCECREGWNGEHCT), and 798 to 831 (DGCPDLCNGNGRCTLGQNSWQCVCQTGWRGPGCN). Disulfide bonds link C576–C586, C580–C591, C593–C602, C611–C622, C624–C633, C640–C651, C645–C656, C658–C667, C672–C683, C677–C688, C690–C699, C710–C723, C725–C734, C738–C748, C742–C753, C755–C764, C769–C779, C773–C784, C786–C795, C800–C810, C804–C819, and C821–C830. N-linked (GlcNAc...) asparagine glycans are attached at residues N915, N938, and N1257. 5 NHL repeats span residues 1262–1306 (LELR…VKSL), 1332–1376 (ARCG…NGII), 1391–1442 (LSCD…IAGR), 1464–1491 (LESASAIAISHTGVLYITETDEKKINRL), and 1520–1563 (CYSG…VSKN). Residues 1573 to 1592 (YEAASPGEQELYVFNADGIH) form a YD 1 repeat. N-linked (GlcNAc...) asparagine glycosylation is present at N1606. YD repeat units follow at residues 1609 to 1629 (YSADNDVTELIDNNGNSLKIR), 1672 to 1691 (YDGNTGLLATKSDETGWTTF), and 1692 to 1714 (YDYDHEGRLTNVTRPTGVVTSLH). N1702, N1739, N1763, N1797, and N1882 each carry an N-linked (GlcNAc...) asparagine glycan. 18 YD repeats span residues 1885 to 1904 (YFFNGRLAGLQRGAMSERTD), 1926 to 1944 (YLDKSMVLLLQSQRQYIFE), 1945 to 1965 (YDSSDRLHAVTMPSVARHSMS), 1972 to 1989 (YIRNIYNPPESNASVIFD), 1990 to 2011 (YSDDGRILKTSFLGTGRQVFYK), 2012 to 2029 (YGKLSKLSEIVYDSTAVT), 2032 to 2052 (YDETTGVLKMVNLQSGGFSCT), 2055 to 2075 (YRKVGPLVDKQIYRFSEEGMI), 2083 to 2103 (YHDNSFRIASIKPVISETPLP), 2109 to 2126 (YDEISGKVEHFGKFGVIY), 2127 to 2153 (YDINQIITTAVMTLSKHFDTHGRIKEV), 2155 to 2168 (YEMFRSLMYWMTVQ), 2169 to 2192 (YDSMGRVIKRELKLGPYANTTKYT), 2195 to 2215 (YDGDGQLQSVAVNDRPTWRYS), 2216 to 2236 (YDLNGNLHLLNPGNSARLMPL), 2238 to 2258 (YDLRDRITRLGDVQYKIDDDG), 2270 to 2290 (YNSKGLLTRAYNKASGWSVQY), and 2292 to 2312 (YDGVGRRASYKTNLGHHLQYF). A glycan (N-linked (GlcNAc...) asparagine) is linked at N1983. An N-linked (GlcNAc...) asparagine glycan is attached at N2187. N2327 is a glycosylation site (N-linked (GlcNAc...) asparagine). The stretch at 2338 to 2379 (YDLQGHLFAMESSSGEEYYVASDNTGTPLAVYSINGLMIKQL) is one YD 23 repeat. N2638 is a glycosylation site (N-linked (GlcNAc...) asparagine).

Belongs to the tenascin family. Teneurin subfamily. In terms of assembly, homodimer; disulfide-linked. Heterodimer with either TENM1 or TENM3. May also form heterodimer with TENM4. Post-translationally, derives from the membrane form by proteolytic processing. Derives from the plasma membrane form by proteolytic cleavage and translocates to the nucleus. Homophilic binding of the C-terminal extracellular domain stimulates its proteolytic cleavage and release in the cytoplasmic. Is subjected to rapid degradation by the proteasome pathway. In terms of tissue distribution, expressed in the cortex, CA1, CA2, CA3, dentate gyrus and granular layer of the hippocampus. Expressed in the Purkinje cells and molecular layer of the cerebellum.

Its subcellular location is the cell membrane. It is found in the presynaptic cell membrane. The protein resides in the postsynaptic cell membrane. It localises to the endoplasmic reticulum. The protein localises to the golgi apparatus. Its subcellular location is the synapse. It is found in the cell projection. The protein resides in the dendritic spine. It localises to the filopodium. The protein localises to the growth cone. Its subcellular location is the nucleus. It is found in the PML body. Functionally, involved in neural development, regulating the establishment of proper connectivity within the nervous system. Acts as a ligand of the ADGRL1 and ADGRL3 receptors that are expressed at the surface of adjacent cells. Promotes the formation of filopodia and enlarged growth cone in neuronal cells. Mediates axon guidance and homophilic and heterophilic cell-cell adhesion. May function as a cellular signal transducer. Induces gene transcription inhibition. This chain is Teneurin-2 (Tenm2), found in Mus musculus (Mouse).